We begin with the raw amino-acid sequence, 272 residues long: Type III pantothenate kinase (272 aa).

6–13 (DVRNTHTV) lines the ATP pocket. Position 109-112 (109-112 (GADR)) interacts with substrate. Catalysis depends on aspartate 111, which acts as the Proton acceptor. Aspartate 131 provides a ligand contact to K(+). An ATP-binding site is contributed by serine 134. Residue threonine 186 coordinates substrate.

It belongs to the type III pantothenate kinase family. In terms of assembly, homodimer. It depends on NH4(+) as a cofactor. Requires K(+) as cofactor.

The protein resides in the cytoplasm. It catalyses the reaction (R)-pantothenate + ATP = (R)-4'-phosphopantothenate + ADP + H(+). The protein operates within cofactor biosynthesis; coenzyme A biosynthesis; CoA from (R)-pantothenate: step 1/5. Its function is as follows. Catalyzes the phosphorylation of pantothenate (Pan), the first step in CoA biosynthesis. The sequence is that of Type III pantothenate kinase from Mycobacterium bovis (strain BCG / Pasteur 1173P2).